Here is a 76-residue protein sequence, read N- to C-terminus: Putative snRNP Sm-like protein (76 aa).

The Sm domain occupies 4–76; the sequence is RPLDVIHRSL…VLAISPVDIE (73 aa).

This sequence belongs to the snRNP Sm proteins family.

This chain is Putative snRNP Sm-like protein, found in Thermococcus gammatolerans (strain DSM 15229 / JCM 11827 / EJ3).